The following is a 365-amino-acid chain: Protein RecA (365 aa).

73–80 (GPESSGKT) is an ATP binding site.

This sequence belongs to the RecA family.

Its subcellular location is the cytoplasm. Can catalyze the hydrolysis of ATP in the presence of single-stranded DNA, the ATP-dependent uptake of single-stranded DNA by duplex DNA, and the ATP-dependent hybridization of homologous single-stranded DNAs. It interacts with LexA causing its activation and leading to its autocatalytic cleavage. The sequence is that of Protein RecA from Prochlorococcus marinus (strain AS9601).